A 512-amino-acid chain; its full sequence is 2-isopropylmalate synthase (512 aa).

One can recognise a Pyruvate carboxyltransferase domain in the interval 4–266 (IEIFDTTLRD…TTKLNLKEIA (263 aa)). Residues Asp13, His201, His203, and Asn237 each contribute to the Mn(2+) site. The regulatory domain stretch occupies residues 390 to 512 (QLESVQLAYG…GEPTPVSATI (123 aa)).

The protein belongs to the alpha-IPM synthase/homocitrate synthase family. LeuA type 1 subfamily. As to quaternary structure, homodimer. Mn(2+) is required as a cofactor.

The protein resides in the cytoplasm. It catalyses the reaction 3-methyl-2-oxobutanoate + acetyl-CoA + H2O = (2S)-2-isopropylmalate + CoA + H(+). It participates in amino-acid biosynthesis; L-leucine biosynthesis; L-leucine from 3-methyl-2-oxobutanoate: step 1/4. In terms of biological role, catalyzes the condensation of the acetyl group of acetyl-CoA with 3-methyl-2-oxobutanoate (2-ketoisovalerate) to form 3-carboxy-3-hydroxy-4-methylpentanoate (2-isopropylmalate). This Brevibacillus brevis (strain 47 / JCM 6285 / NBRC 100599) protein is 2-isopropylmalate synthase.